The chain runs to 463 residues: Cytoplasmic tRNA 2-thiolation protein 2 (463 aa).

This sequence belongs to the CTU2/NCS2 family.

It is found in the cytoplasm. It participates in tRNA modification; 5-methoxycarbonylmethyl-2-thiouridine-tRNA biosynthesis. Functionally, plays a central role in 2-thiolation of mcm(5)S(2)U at tRNA wobble positions of tRNA(Lys), tRNA(Glu) and tRNA(Gln). May act by forming a heterodimer with NCS6 that ligates sulfur from thiocarboxylated URM1 onto the uridine of tRNAs at wobble position. Prior mcm(5) tRNA modification by the elongator complex is required for 2-thiolation. May also be involved in protein urmylation. This chain is Cytoplasmic tRNA 2-thiolation protein 2, found in Kluyveromyces lactis (strain ATCC 8585 / CBS 2359 / DSM 70799 / NBRC 1267 / NRRL Y-1140 / WM37) (Yeast).